The chain runs to 961 residues: Transcription factor MYB3R-4 (961 aa).

Residues 1 to 33 (MEAESSTPQERIPKLRHGRTSGPARRSTRGQWT) are disordered. HTH myb-type domains follow at residues 24 to 75 (ARRS…QKVL), 76 to 131 (NPEL…NPAI), and 132 to 182 (NKEA…KKKL). DNA-binding regions (H-T-H motif) lie at residues 52–75 (WKKIAEYFKDRTDVQCLHRWQKVL), 104–127 (WSTIARFLPGRIGKQCRERWHNHL), and 155–178 (WAELTKFLPGRSDNGIKNHWHSSV). 2 disordered regions span residues 390–457 (GHSV…LIIS) and 534–555 (RPHSLPKHEPNMTNEQHHEDMG). Composition is skewed to polar residues over residues 391–405 (HSVSRSLTQEPNEFN) and 416–430 (SSASDRQISEATKSP). Low complexity predominate over residues 431–444 (TQSSSSRFTATAAS). The span at 534 to 554 (RPHSLPKHEPNMTNEQHHEDM) shows a compositional bias: basic and acidic residues. Residues 612 to 619 (GKKTLVGA) carry the Nuclear localization signal motif. Residues 756–781 (NTGKPVLSTPGQSVTKAEKAQVSTPR) form a disordered region. The segment covering 764–781 (TPGQSVTKAEKAQVSTPR) has biased composition (polar residues).

As to quaternary structure, component of a DREAM-like complex which modulates a variety of developmentally regulated genes and of the mitotic genes in proliferating and differentiated cells. Associates with CDKA-1, RBR1 and E2FB, but not with E2FC, in proliferating cells, at early stages of leaves development. As to expression, expressed in roots, cotyledons and leaves, especially in vascular tissues, and in flowers.

Its subcellular location is the nucleus. In terms of biological role, transcription factor that binds 5'-AACGG-3' motifs in gene promoters. Involved in the regulation of cytokinesis, probably via the activation of several G2/M phase-specific genes transcription (e.g. KNOLLE). Required for the maintenance of diploidy. Involved in transcription regulation during induced endoreduplication at the powdery mildew (e.g. G.orontii) infection site, thus promoting G.orontii growth and reproduction. This Arabidopsis thaliana (Mouse-ear cress) protein is Transcription factor MYB3R-4.